A 117-amino-acid polypeptide reads, in one-letter code: UPF0251 protein DET0218 (117 aa).

This sequence belongs to the UPF0251 family.

In Dehalococcoides mccartyi (strain ATCC BAA-2266 / KCTC 15142 / 195) (Dehalococcoides ethenogenes (strain 195)), this protein is UPF0251 protein DET0218.